A 200-amino-acid polypeptide reads, in one-letter code: MRTLDKRIAPNVKLAASLVARAPTLTLAFDARCKSRVAATLDTGEDVAVLLPRGTVLRDGDVLVADDGALVRIVAAPETVLLVRAHDPLTLMRAAYHLGNRHTPVEIGDGYLKLEADPVLADMLRRLGTQVDETQAPFQPEAGAYGGGHKHGHDATFAEDYALAQQVFGEHHGHAHPHPHDHDHQHGPGCAHGRHGHDHH.

Residues 171–200 are disordered; the sequence is HHGHAHPHPHDHDHQHGPGCAHGRHGHDHH.

The protein belongs to the UreE family.

The protein resides in the cytoplasm. In terms of biological role, involved in urease metallocenter assembly. Binds nickel. Probably functions as a nickel donor during metallocenter assembly. This is Urease accessory protein UreE from Burkholderia vietnamiensis (strain G4 / LMG 22486) (Burkholderia cepacia (strain R1808)).